A 247-amino-acid chain; its full sequence is Ribonuclease PH (247 aa).

Phosphate contacts are provided by residues Arg87 and 125–127 (GTR).

This sequence belongs to the RNase PH family. Homohexameric ring arranged as a trimer of dimers.

It catalyses the reaction tRNA(n+1) + phosphate = tRNA(n) + a ribonucleoside 5'-diphosphate. Functionally, phosphorolytic 3'-5' exoribonuclease that plays an important role in tRNA 3'-end maturation. Removes nucleotide residues following the 3'-CCA terminus of tRNAs; can also add nucleotides to the ends of RNA molecules by using nucleoside diphosphates as substrates, but this may not be physiologically important. Probably plays a role in initiation of 16S rRNA degradation (leading to ribosome degradation) during starvation. The sequence is that of Ribonuclease PH from Frankia casuarinae (strain DSM 45818 / CECT 9043 / HFP020203 / CcI3).